The sequence spans 303 residues: Recombination-associated protein RdgC (303 aa).

It belongs to the RdgC family.

It localises to the cytoplasm. Its subcellular location is the nucleoid. May be involved in recombination. In Edwardsiella ictaluri (strain 93-146), this protein is Recombination-associated protein RdgC.